We begin with the raw amino-acid sequence, 280 residues long: uncharacterized protein (280 aa).

The transit peptide at 1–51 directs the protein to the chloroplast; sequence MATSLLLRHSSAVFFSQSSFFTKNKSFRSFTSIKMEKGEAENAVKTKKVFV.

Belongs to the NAD(P)-dependent epimerase/dehydratase family.

It localises to the plastid. The protein resides in the chloroplast. It is found in the plastoglobule. This is an uncharacterized protein from Arabidopsis thaliana (Mouse-ear cress).